Reading from the N-terminus, the 190-residue chain is Shikimate kinase (190 aa).

13 to 18 (GAGKTT) contacts ATP. Threonine 17 provides a ligand contact to Mg(2+). The substrate site is built by aspartate 35, arginine 59, and glycine 81. Arginine 119 is a binding site for ATP. Residue arginine 138 coordinates substrate.

It belongs to the shikimate kinase family. Monomer. Requires Mg(2+) as cofactor.

It localises to the cytoplasm. The catalysed reaction is shikimate + ATP = 3-phosphoshikimate + ADP + H(+). It functions in the pathway metabolic intermediate biosynthesis; chorismate biosynthesis; chorismate from D-erythrose 4-phosphate and phosphoenolpyruvate: step 5/7. In terms of biological role, catalyzes the specific phosphorylation of the 3-hydroxyl group of shikimic acid using ATP as a cosubstrate. The sequence is that of Shikimate kinase from Ralstonia nicotianae (strain ATCC BAA-1114 / GMI1000) (Ralstonia solanacearum).